Reading from the N-terminus, the 350-residue chain is Small ribosomal subunit biogenesis GTPase RsgA (350 aa).

Polar residues predominate over residues 1 to 17 (MSKNKLSKGQQRRVNAN). The disordered stretch occupies residues 1 to 27 (MSKNKLSKGQQRRVNANHQRRLKTSAE). The 170-residue stretch at 104 to 273 (TSVLTRPDFY…VIDSPGVREF (170 aa)) folds into the CP-type G domain. GTP contacts are provided by residues 160–163 (NKID) and 214–222 (GQSGVGKSS). Residues cysteine 297, cysteine 302, histidine 304, and cysteine 310 each coordinate Zn(2+).

It belongs to the TRAFAC class YlqF/YawG GTPase family. RsgA subfamily. In terms of assembly, monomer. Associates with 30S ribosomal subunit, binds 16S rRNA. It depends on Zn(2+) as a cofactor.

It localises to the cytoplasm. Functionally, one of several proteins that assist in the late maturation steps of the functional core of the 30S ribosomal subunit. Helps release RbfA from mature subunits. May play a role in the assembly of ribosomal proteins into the subunit. Circularly permuted GTPase that catalyzes slow GTP hydrolysis, GTPase activity is stimulated by the 30S ribosomal subunit. The protein is Small ribosomal subunit biogenesis GTPase RsgA of Salmonella dublin (strain CT_02021853).